Reading from the N-terminus, the 893-residue chain is Alpha-actinin-1 (893 aa).

An actin-binding region spans residues 1 to 248 (MDHHYDPQQT…IMTYVSSFYH (248 aa)). Phosphotyrosine; by FAK1 is present on Tyr13. Calponin-homology (CH) domains follow at residues 32-136 (KQQR…LRFA) and 145-251 (TSAK…HAFS). Spectrin repeat units lie at residues 275-385 (QLME…WLLN), 395-500 (HLAE…ALER), 510-621 (QLYL…ALME), and 631-734 (RLRK…EVEN). EF-hand domains follow at residues 747–782 (EQMN…LGYD) and 788–823 (QGEA…ETAD). 5 residues coordinate Ca(2+): Asp760, Asp762, Ser764, Thr766, and Glu771.

This sequence belongs to the alpha-actinin family. In terms of assembly, homodimer; antiparallel. Interacts with PDLIM4 (via PDZ domain).

It localises to the cytoplasm. The protein localises to the cytoskeleton. The protein resides in the myofibril. It is found in the sarcomere. Its subcellular location is the z line. It localises to the cell membrane. The protein localises to the cell junction. The protein resides in the cell projection. It is found in the ruffle. Its function is as follows. F-actin cross-linking protein is thought to anchor actin to a variety of intracellular structures. This is a bundling protein. The chain is Alpha-actinin-1 (ACTN1) from Gallus gallus (Chicken).